We begin with the raw amino-acid sequence, 131 residues long: Small ribosomal subunit protein uS11 (131 aa).

The protein belongs to the universal ribosomal protein uS11 family. As to quaternary structure, part of the 30S ribosomal subunit. Interacts with proteins S7 and S18. Binds to IF-3.

In terms of biological role, located on the platform of the 30S subunit, it bridges several disparate RNA helices of the 16S rRNA. Forms part of the Shine-Dalgarno cleft in the 70S ribosome. The polypeptide is Small ribosomal subunit protein uS11 (Helicobacter pylori (strain G27)).